The sequence spans 222 residues: Dense granule protein 3 (222 aa).

The next 2 membrane-spanning stretches (helical) occupy residues 22–42 and 162–182; these read LIPF…GGLA and IPGY…RKVL. Residues 219 to 222 carry the Prevents secretion from ER motif; sequence KKQT.

In terms of assembly, homodimer. Interacts (via N-terminus) with human host CAMLG (via N-terminus).

It localises to the cytoplasm. The protein localises to the host endoplasmic reticulum. Its subcellular location is the parasitophorous vacuole membrane. In terms of biological role, direct host-parasite interaction occurs at the cytoplasmic faces of the parasitophorous vacuole membrane (PVM) and the host endoplasmic reticulum (ER) membrane via GRA3 and host CAMLG association. Direct insertion of GRA3 ER retrieval motif into the host ER membrane contributes to the host ER recruitment to the PVM. The polypeptide is Dense granule protein 3 (Toxoplasma gondii).